A 260-amino-acid polypeptide reads, in one-letter code: DNA repair protein RecO (260 aa).

This sequence belongs to the RecO family.

In terms of biological role, involved in DNA repair and RecF pathway recombination. The chain is DNA repair protein RecO from Salinibacter ruber (strain DSM 13855 / M31).